We begin with the raw amino-acid sequence, 436 residues long: MPASNFPTGVHDMRLGVIADDFTGATDIAGFLVGNGLRTIQLNGVPADDLAVDADAVVISLKARSCPTGQAIAESLAALKWLQKNNCQQFFFKYCSTFDSTPKGNIGPVTDALLEALGEEFTVICPALPVNGRTIYNGYLFVNGVLLSETGMRNHPVTPMTDSNIMRVMESQSRGRAGNISSTIVDQGSDAVRDALRKLQSEGIRYAVLDALNDQHIETLGRAVSQMKLVTGGSGLADGMARAWTQLRGKNVAAAEAAGAPVKGRTVILSGSCSQMTNAQVAAYKAKAPALAMDVEKAINDAAYIDVLAEWVLAQSGDALPPLVYATMPPEALKAVQERFGGERASAAIEDLFGQLAKRLEAEGFTRFIVAGGETSGAVTQALAIDGFTIGPQIAPGVPWVRGIGKPLSLALKSGNFGTEAFFFEAQKIANQEGDK.

ATP contacts are provided by residues S272, 372 to 375 (GGET), and G415.

It belongs to the four-carbon acid sugar kinase family.

It catalyses the reaction 3-dehydro-L-erythronate + ATP = 3-dehydro-4-O-phospho-L-erythronate + ADP + H(+). It carries out the reaction 3-dehydro-D-erythronate + ATP = 3-dehydro-4-O-phospho-D-erythronate + ADP + H(+). Functionally, catalyzes the ATP-dependent phosphorylation of 3-oxo-tetronate to 3-oxo-tetronate 4-phosphate. This chain is 3-oxo-tetronate kinase, found in Brucella melitensis biotype 1 (strain ATCC 23456 / CCUG 17765 / NCTC 10094 / 16M).